A 238-amino-acid polypeptide reads, in one-letter code: Glycerol uptake facilitator protein 4 (238 aa).

Helical transmembrane passes span 2 to 22 and 39 to 59; these read IHQL…GVGV and IFAI…FGNV. An NPA 1 motif is present at residues 62-64; sequence NPA. Helical transmembrane passes span 80–100, 135–155, and 158–178; these read FIPY…IVWI, FFVE…ISEV, and PGIV…GLGG. Residues 185-187 carry the NPA 2 motif; sequence NLA. The chain crosses the membrane as a helical span at residues 211-231; the sequence is YGIIVPGIAPFVGAACAALFM.

It belongs to the MIP/aquaporin (TC 1.A.8) family.

The protein localises to the cell membrane. Transporter that facilitates the transmembrane diffusion of water, dihydroxyacetone, glycerol, urea, H(2)O(2) and D/L-lactic acid. Is involved in the cellular racemization of lactate and lactate metabolism, but has likely a more general physiological role. The transported molecule is indeed lactic acid and not the lactate anion, in agreement with the assumption that, with very few exceptions, MIPs (major intrinsic proteins) only facilitate the transport of uncharged solutes. This Lactiplantibacillus plantarum (strain ATCC BAA-793 / NCIMB 8826 / WCFS1) (Lactobacillus plantarum) protein is Glycerol uptake facilitator protein 4.